Here is a 459-residue protein sequence, read N- to C-terminus: Cysteine--tRNA ligase (459 aa).

Residue C28 participates in Zn(2+) binding. Residues 30–40 (VTVYDLCHIGH) carry the 'HIGH' region motif. C209, H234, and E238 together coordinate Zn(2+). Positions 266–270 (KMSKS) match the 'KMSKS' region motif. K269 provides a ligand contact to ATP.

It belongs to the class-I aminoacyl-tRNA synthetase family. Monomer. It depends on Zn(2+) as a cofactor.

It is found in the cytoplasm. The catalysed reaction is tRNA(Cys) + L-cysteine + ATP = L-cysteinyl-tRNA(Cys) + AMP + diphosphate. This chain is Cysteine--tRNA ligase, found in Histophilus somni (strain 129Pt) (Haemophilus somnus).